Consider the following 1389-residue polypeptide: DNA-directed RNA polymerase subunit beta' (1389 aa).

Cys73, Cys75, Cys88, and Cys91 together coordinate Zn(2+). Residues Asp464, Asp466, and Asp468 each contribute to the Mg(2+) site. Zn(2+) is bound by residues Cys810, Cys884, Cys891, and Cys894.

This sequence belongs to the RNA polymerase beta' chain family. In terms of assembly, the RNAP catalytic core consists of 2 alpha, 1 beta, 1 beta' and 1 omega subunit. When a sigma factor is associated with the core the holoenzyme is formed, which can initiate transcription. It depends on Mg(2+) as a cofactor. Requires Zn(2+) as cofactor.

The catalysed reaction is RNA(n) + a ribonucleoside 5'-triphosphate = RNA(n+1) + diphosphate. Its function is as follows. DNA-dependent RNA polymerase catalyzes the transcription of DNA into RNA using the four ribonucleoside triphosphates as substrates. This chain is DNA-directed RNA polymerase subunit beta', found in Pelagibacter ubique (strain HTCC1062).